A 126-amino-acid polypeptide reads, in one-letter code: Aspartate 1-decarboxylase 1 (126 aa).

Ser-25 functions as the Schiff-base intermediate with substrate; via pyruvic acid in the catalytic mechanism. Ser-25 bears the Pyruvic acid (Ser) mark. A substrate-binding site is contributed by Thr-57. The Proton donor role is filled by Tyr-58. 73–75 (GSA) lines the substrate pocket.

It belongs to the PanD family. In terms of assembly, heterooctamer of four alpha and four beta subunits. Pyruvate serves as cofactor. Post-translationally, is synthesized initially as an inactive proenzyme, which is activated by self-cleavage at a specific serine bond to produce a beta-subunit with a hydroxyl group at its C-terminus and an alpha-subunit with a pyruvoyl group at its N-terminus.

Its subcellular location is the cytoplasm. The enzyme catalyses L-aspartate + H(+) = beta-alanine + CO2. Its pathway is cofactor biosynthesis; (R)-pantothenate biosynthesis; beta-alanine from L-aspartate: step 1/1. In terms of biological role, catalyzes the pyruvoyl-dependent decarboxylation of aspartate to produce beta-alanine. In Polaromonas sp. (strain JS666 / ATCC BAA-500), this protein is Aspartate 1-decarboxylase 1.